A 200-amino-acid chain; its full sequence is COMM domain-containing protein 7 (200 aa).

Residues Q133 to S200 enclose the COMM domain.

It belongs to the COMM domain-containing protein 7 family. Component of the commander complex consisting of the CCC subcomplex and the retriever subcomplex. Component of the CCC (COMMD/CCDC22/CCDC93) subcomplex consisting of COMMD1, COMMD2, COMMD3, COMMD4, COMMD5, COMMD6, COMMD7, COMMD8, COMMD9, COMMD10, CCDC22 and CCDC93; within the complex forms a heterodimer with COMMD9. Interacts with RELA. Interacts with CCDC22, CCDC93, SCNN1B, CUL7.

The protein localises to the cytoplasmic vesicle. Its function is as follows. Scaffold protein in the commander complex that is essential for endosomal recycling of transmembrane cargos; the commander complex is composed of the CCC subcomplex and the retriever subcomplex. May modulate activity of cullin-RING E3 ubiquitin ligase (CRL) complexes. Associates with the NF-kappa-B complex and suppresses its transcriptional activity. The polypeptide is COMM domain-containing protein 7 (Commd7) (Mus musculus (Mouse)).